The chain runs to 720 residues: Fatty acid CoA ligase Acsl3 (720 aa).

Residues 21–41 traverse the membrane as a helical; Signal-anchor for type III membrane protein segment; that stretch reads ILLYFIHFLISLYTILTYIPF. Residues 42-720 are Cytoplasmic-facing; sequence YFFSESRQEK…ADIERMYGRK (679 aa). Residue Ser683 is modified to Phosphoserine.

It belongs to the ATP-dependent AMP-binding enzyme family. The cofactor is Mg(2+).

It localises to the mitochondrion outer membrane. The protein resides in the peroxisome membrane. It is found in the microsome membrane. The protein localises to the endoplasmic reticulum membrane. The enzyme catalyses a long-chain fatty acid + ATP + CoA = a long-chain fatty acyl-CoA + AMP + diphosphate. It catalyses the reaction (5Z,8Z,11Z,14Z)-eicosatetraenoate + ATP + CoA = (5Z,8Z,11Z,14Z)-eicosatetraenoyl-CoA + AMP + diphosphate. The catalysed reaction is (E)-hexadec-2-enoate + ATP + CoA = (2E)-hexadecenoyl-CoA + AMP + diphosphate. It carries out the reaction 15-hydroxy-(5Z,8Z,11Z,13E)-eicosatetraenoate + ATP + CoA = 15-hydroxy-(5Z,8Z,11Z,13E)-eicosatetraenoyl-CoA + AMP + diphosphate. The enzyme catalyses 12-hydroxy-(5Z,8Z,10E,14Z)-eicosatetraenoate + ATP + CoA = 12-hydroxy-(5Z,8Z,10E,14Z)-eicosatetraenoyl-CoA + AMP + diphosphate. It catalyses the reaction 5-hydroxy-(6E,8Z,11Z,14Z)-eicosatetraenoate + ATP + CoA = 5-hydroxy-(6E,8Z,11Z,14Z)-eicosatetraenoyl-CoA + AMP + diphosphate. The catalysed reaction is 14,15-epoxy-(5Z,8Z,11Z)-eicosatrienoate + ATP + CoA = 14,15-epoxy-(5Z,8Z,11Z)-eicosatrienoyl-CoA + AMP + diphosphate. It carries out the reaction 11,12-epoxy-(5Z,8Z,14Z)-eicosatrienoate + ATP + CoA = 11,12-epoxy-(5Z,8Z,14Z)-eicosatrienoyl-CoA + AMP + diphosphate. The enzyme catalyses a medium-chain fatty acid + ATP + CoA = a medium-chain fatty acyl-CoA + AMP + diphosphate. It catalyses the reaction hexadecanoate + ATP + CoA = hexadecanoyl-CoA + AMP + diphosphate. The catalysed reaction is tetradecanoate + ATP + CoA = tetradecanoyl-CoA + AMP + diphosphate. It carries out the reaction dodecanoate + ATP + CoA = dodecanoyl-CoA + AMP + diphosphate. The enzyme catalyses octadecanoate + ATP + CoA = octadecanoyl-CoA + AMP + diphosphate. It catalyses the reaction eicosanoate + ATP + CoA = eicosanoyl-CoA + AMP + diphosphate. The catalysed reaction is (9Z)-octadecenoate + ATP + CoA = (9Z)-octadecenoyl-CoA + AMP + diphosphate. It carries out the reaction (9Z)-hexadecenoate + ATP + CoA = (9Z)-hexadecenoyl-CoA + AMP + diphosphate. The enzyme catalyses (9Z,12Z)-octadecadienoate + ATP + CoA = (9Z,12Z)-octadecadienoyl-CoA + AMP + diphosphate. It catalyses the reaction (9Z,12Z,15Z)-octadecatrienoate + ATP + CoA = (9Z,12Z,15Z)-octadecatrienoyl-CoA + AMP + diphosphate. The catalysed reaction is (4Z,7Z,10Z,13Z,16Z,19Z)-docosahexaenoate + ATP + CoA = (4Z,7Z,10Z,13Z,16Z,19Z)-docosahexaenoyl-CoA + AMP + diphosphate. It carries out the reaction (5Z,8Z,11Z,14Z,17Z)-eicosapentaenoate + ATP + CoA = (5Z,8Z,11Z,14Z,17Z)-eicosapentaenoyl-CoA + AMP + diphosphate. The enzyme catalyses a fatty acid + ATP + CoA = a fatty acyl-CoA + AMP + diphosphate. Functionally, acyl-CoA synthetases (ACSL) activates long-chain fatty acids for both synthesis of cellular lipids, and degradation via beta-oxidation. Required for the incorporation of fatty acids into phosphatidylcholine, the major phospholipid located on the surface of VLDL (very low density lipoproteins). Has mainly an anabolic role in energy metabolism. Mediates hepatic lipogenesis. Preferentially uses myristate, laurate, arachidonate and eicosapentaenoate as substrates. Both isoforms exhibit the same level of activity. The polypeptide is Fatty acid CoA ligase Acsl3 (Homo sapiens (Human)).